The chain runs to 229 residues: uncharacterized protein (229 aa).

A PilZ domain is found at 102–217 (RRRTVRVEPD…REKVRRYVFE (116 aa)).

This sequence to A.aeolicus aq_820 and aq_1211.

This is an uncharacterized protein from Aquifex aeolicus (strain VF5).